Here is a 259-residue protein sequence, read N- to C-terminus: 2-oxoglutaramate amidase (259 aa).

The region spanning tryptophan 3 to leucine 238 is the CN hydrolase domain. Glutamate 42 acts as the Proton acceptor in catalysis. Lysine 111 (proton donor) is an active-site residue. Cysteine 145 acts as the Nucleophile in catalysis.

The protein belongs to the carbon-nitrogen hydrolase superfamily. NIT1/NIT2 family.

The catalysed reaction is 2-oxoglutaramate + H2O = 2-oxoglutarate + NH4(+). Its function is as follows. Involved in the methylthioribose (MTR) recycling pathway. Probably catalyzes the conversion of 2-oxoglutaramate to 2-oxoglutarate. The polypeptide is 2-oxoglutaramate amidase (Bacillus subtilis (strain 168)).